Reading from the N-terminus, the 834-residue chain is Periplasmic nitrate reductase (834 aa).

Residues 1–29 (MNLTRREFAKANAAAIAAAAAGLPILVRA) constitute a signal peptide (tat-type signal). In terms of domain architecture, 4Fe-4S Mo/W bis-MGD-type spans 41-97 (LVWNKAPCRFCGTGCSVMVATRDGQVVATHGDIKAEVNRGINCVKGYFLSKIMYGSD). [4Fe-4S] cluster contacts are provided by cysteine 48, cysteine 51, cysteine 55, and cysteine 83. Residues lysine 85, glutamine 152, asparagine 177, cysteine 181, 214 to 221 (WGSNMAEM), 245 to 249 (STFEH), 264 to 266 (QTD), methionine 375, glutamine 379, asparagine 485, 511 to 512 (SD), lysine 534, aspartate 561, and 721 to 730 (TGRVLEHWHT) contribute to the Mo-bis(molybdopterin guanine dinucleotide) site. Phenylalanine 797 contributes to the substrate binding site. Mo-bis(molybdopterin guanine dinucleotide) contacts are provided by asparagine 805 and lysine 822.

It belongs to the prokaryotic molybdopterin-containing oxidoreductase family. NasA/NapA/NarB subfamily. In terms of assembly, component of the periplasmic nitrate reductase NapAB complex composed of NapA and NapB. It depends on [4Fe-4S] cluster as a cofactor. Mo-bis(molybdopterin guanine dinucleotide) serves as cofactor. Post-translationally, predicted to be exported by the Tat system. The position of the signal peptide cleavage has not been experimentally proven.

It localises to the periplasm. The enzyme catalyses 2 Fe(II)-[cytochrome] + nitrate + 2 H(+) = 2 Fe(III)-[cytochrome] + nitrite + H2O. Catalytic subunit of the periplasmic nitrate reductase complex NapAB. Receives electrons from NapB and catalyzes the reduction of nitrate to nitrite. The protein is Periplasmic nitrate reductase of Pseudomonas aeruginosa (strain LESB58).